Here is a 1396-residue protein sequence, read N- to C-terminus: DNA-directed RNA polymerase subunit beta' (1396 aa).

4 residues coordinate Zn(2+): cysteine 70, cysteine 72, cysteine 85, and cysteine 88. 3 residues coordinate Mg(2+): aspartate 460, aspartate 462, and aspartate 464. Positions 814, 889, 896, and 899 each coordinate Zn(2+).

This sequence belongs to the RNA polymerase beta' chain family. As to quaternary structure, the RNAP catalytic core consists of 2 alpha, 1 beta, 1 beta' and 1 omega subunit. When a sigma factor is associated with the core the holoenzyme is formed, which can initiate transcription. It depends on Mg(2+) as a cofactor. Zn(2+) serves as cofactor.

It catalyses the reaction RNA(n) + a ribonucleoside 5'-triphosphate = RNA(n+1) + diphosphate. Its function is as follows. DNA-dependent RNA polymerase catalyzes the transcription of DNA into RNA using the four ribonucleoside triphosphates as substrates. This Hahella chejuensis (strain KCTC 2396) protein is DNA-directed RNA polymerase subunit beta'.